The sequence spans 377 residues: Probable G-protein coupled receptor F27E5.8 (377 aa).

The Extracellular segment spans residues 1–34 (MSEQDSSSPKYMRFLLGNFTSAEMVTDGNFLIYC). Asparagine 18 carries N-linked (GlcNAc...) asparagine glycosylation. Residues 35–55 (IEMGLLVIGVLENIFMIGAVF) traverse the membrane as a helical segment. The Cytoplasmic portion of the chain corresponds to 56 to 71 (STSCLHLNLRILICNC). A helical transmembrane segment spans residues 72–92 (CLGFILMAVGRAMIAVPLCIA). Residues 93 to 105 (HLRDVDISSHAWC) lie on the Extracellular side of the membrane. The helical transmembrane segment at 106-126 (FIANAVHHSSADSVCLSFVFI) threads the bilayer. The Cytoplasmic segment spans residues 127 to 144 (MLERTAGTIWSKDYEKTK). The helical transmembrane segment at 145-165 (IHIFPCIFAFLQWFIPMFMIL) threads the bilayer. The Extracellular portion of the chain corresponds to 166–195 (GNFLDRANRMEHFLLYPHLPCQIEYLTPTM). The chain crosses the membrane as a helical span at residues 196–216 (FMITIFIIVIGFIASVGGITI). The Cytoplasmic portion of the chain corresponds to 217–251 (VYNKNIKKYNTRDIWFNTVNLSERYQITENIRSTH). The helical transmembrane segment at 252–272 (LLFPLLALMLIFSTLSVSVLI) threads the bilayer. Topologically, residues 273 to 303 (YGGYWVSVMTKEPARFEEVVKWFGRGGEAAQ) are extracellular. The helical transmembrane segment at 304-324 (LFDIITAIYTISFPICAFICH) threads the bilayer. Over 325-377 (PNLFRFLRKFIGWNSYAVRPSNLNEIGGFEMSTAPIRTQTEFHFQELSRQWNT) the chain is Cytoplasmic.

This sequence belongs to the G-protein coupled receptor 1 family.

The protein localises to the cell membrane. This Caenorhabditis elegans protein is Probable G-protein coupled receptor F27E5.8.